Here is a 445-residue protein sequence, read N- to C-terminus: KIN17-like protein (445 aa).

The segment at 26-50 (WYCQLCEKQCRDENGFKCHISSESH) adopts a C2H2-type zinc-finger fold. Low complexity-rich tracts occupy residues 215 to 229 (NTTTTTTNTTTTTTN) and 239 to 253 (NDNNSSNNNYNDQTN). The interval 215 to 256 (NTTTTTTNTTTTTTNKNIFDKLKTNDNNSSNNNYNDQTNPKP) is disordered.

The protein belongs to the KIN17 family.

The protein is KIN17-like protein of Dictyostelium discoideum (Social amoeba).